The sequence spans 211 residues: DNA dC-&gt;dU-editing enzyme APOBEC-3H (211 aa).

A CMP/dCMP-type deaminase domain is found at 4–126; the sequence is LTAKTFSLQF…RRQQEGLRLL (123 aa). Histidine 54 serves as a coordination point for Zn(2+). Residue glutamate 56 is the Proton donor of the active site. Residues cysteine 85 and cysteine 88 each contribute to the Zn(2+) site.

This sequence belongs to the cytidine and deoxycytidylate deaminase family. Homodimer. Zn(2+) serves as cofactor.

It localises to the cytoplasm. It catalyses the reaction a 2'-deoxycytidine in single-stranded DNA + H2O + H(+) = a 2'-deoxyuridine in single-stranded DNA + NH4(+). DNA deaminase (cytidine deaminase) which may act as an inhibitor of retrovirus replication and retrotransposon mobility via deaminase-dependent and -independent mechanisms. This is DNA dC-&gt;dU-editing enzyme APOBEC-3H from Pongo pygmaeus (Bornean orangutan).